The chain runs to 458 residues: Histidine--tRNA ligase (458 aa).

This sequence belongs to the class-II aminoacyl-tRNA synthetase family. As to quaternary structure, homodimer.

The protein localises to the cytoplasm. The catalysed reaction is tRNA(His) + L-histidine + ATP = L-histidyl-tRNA(His) + AMP + diphosphate + H(+). The sequence is that of Histidine--tRNA ligase from Micrococcus luteus (strain ATCC 4698 / DSM 20030 / JCM 1464 / CCM 169 / CCUG 5858 / IAM 1056 / NBRC 3333 / NCIMB 9278 / NCTC 2665 / VKM Ac-2230) (Micrococcus lysodeikticus).